The chain runs to 385 residues: 1-deoxy-D-xylulose 5-phosphate reductoisomerase (385 aa).

Residues threonine 10, glycine 11, serine 12, isoleucine 13, glycine 36, asparagine 38, and asparagine 122 each coordinate NADPH. Lysine 123 serves as a coordination point for 1-deoxy-D-xylulose 5-phosphate. Position 124 (glutamate 124) interacts with NADPH. Position 148 (aspartate 148) interacts with Mn(2+). 1-deoxy-D-xylulose 5-phosphate-binding residues include serine 149, glutamate 150, serine 174, and histidine 197. Residue glutamate 150 coordinates Mn(2+). Glycine 203 serves as a coordination point for NADPH. Residues serine 210, asparagine 215, lysine 216, and glutamate 219 each contribute to the 1-deoxy-D-xylulose 5-phosphate site. Glutamate 219 contributes to the Mn(2+) binding site.

It belongs to the DXR family. Mg(2+) serves as cofactor. It depends on Mn(2+) as a cofactor.

The catalysed reaction is 2-C-methyl-D-erythritol 4-phosphate + NADP(+) = 1-deoxy-D-xylulose 5-phosphate + NADPH + H(+). It participates in isoprenoid biosynthesis; isopentenyl diphosphate biosynthesis via DXP pathway; isopentenyl diphosphate from 1-deoxy-D-xylulose 5-phosphate: step 1/6. Catalyzes the NADPH-dependent rearrangement and reduction of 1-deoxy-D-xylulose-5-phosphate (DXP) to 2-C-methyl-D-erythritol 4-phosphate (MEP). This Geobacter sp. (strain M21) protein is 1-deoxy-D-xylulose 5-phosphate reductoisomerase.